The sequence spans 243 residues: Mesoderm posterior protein 1 (243 aa).

Positions 1–86 (MAQPLCEPRS…QRQSASEREK (86 aa)) are disordered. The span at 27–36 (DGNSVCSPAW) shows a compositional bias: polar residues. A bHLH domain is found at 76–130 (GQRQSASEREKLRMRTLARALHELRRFLPPSVAPTGQNLTKIETLRLAIRYIGHL). The short motif at 153–157 (CPLCP) is the CPLCP element. A disordered region spans residues 204 to 228 (AETASQERQEMEPSPSSPLFSSDML).

In terms of tissue distribution, no expression was detected in adult tissues except the testis. Expression in the testis was regulated developmentally; expressed 2 weeks after birth, and increases, reaching the full expression level in mature testes.

The protein resides in the nucleus. Transcription factor. Plays a role in the epithelialization of somitic mesoderm and in the development of cardiac mesoderm. Defines the rostrocaudal patterning of the somites by participating in distinct Notch pathways. The polypeptide is Mesoderm posterior protein 1 (Mesp1) (Mus musculus (Mouse)).